The following is a 130-amino-acid chain: Small ribosomal subunit protein uS9 (130 aa).

This sequence belongs to the universal ribosomal protein uS9 family.

This is Small ribosomal subunit protein uS9 from Geotalea daltonii (strain DSM 22248 / JCM 15807 / FRC-32) (Geobacter daltonii).